A 408-amino-acid chain; its full sequence is Tyrosine--tRNA ligase (408 aa).

Residue Tyr35 participates in L-tyrosine binding. The short motif at 40-49 is the 'HIGH' region element; sequence PTADSLHVGH. L-tyrosine is bound by residues Tyr168 and Gln172. Residues 228-232 carry the 'KMSKS' region motif; it reads KMGKT. Lys231 contributes to the ATP binding site. An S4 RNA-binding domain is found at 342–407; it reads INIIDLLLKT…GKKTYHRVKL (66 aa).

The protein belongs to the class-I aminoacyl-tRNA synthetase family. TyrS type 1 subfamily. As to quaternary structure, homodimer.

Its subcellular location is the cytoplasm. The enzyme catalyses tRNA(Tyr) + L-tyrosine + ATP = L-tyrosyl-tRNA(Tyr) + AMP + diphosphate + H(+). Functionally, catalyzes the attachment of tyrosine to tRNA(Tyr) in a two-step reaction: tyrosine is first activated by ATP to form Tyr-AMP and then transferred to the acceptor end of tRNA(Tyr). This chain is Tyrosine--tRNA ligase, found in Acetivibrio thermocellus (strain ATCC 27405 / DSM 1237 / JCM 9322 / NBRC 103400 / NCIMB 10682 / NRRL B-4536 / VPI 7372) (Clostridium thermocellum).